The sequence spans 157 residues: Biotin carboxyl carrier protein of acetyl-CoA carboxylase (157 aa).

Positions 80–156 (YATIVSPMVG…DCGQALMKVE (77 aa)) constitute a Biotinyl-binding domain. K122 bears the N6-biotinyllysine mark.

It is found in the plastid. It localises to the chloroplast. Its pathway is lipid metabolism; fatty acid biosynthesis. This protein is a component of the acetyl coenzyme A carboxylase complex; first, biotin carboxylase catalyzes the carboxylation of the carrier protein and then the transcarboxylase transfers the carboxyl group to form malonyl-CoA. The polypeptide is Biotin carboxyl carrier protein of acetyl-CoA carboxylase (accB) (Porphyra purpurea (Red seaweed)).